A 1947-amino-acid polypeptide reads, in one-letter code: MENSNSEASAVWNPALRTDDNHETAATVEEISAPVSSDVAPLTPKATTANTDIVPDAIDSINTESPAREETAELPLNEHTHTVPGAAEPVNVGSAGFIETAEAPPTAIDDPGAVPVAVSPNGETSAPAIATDVTSVSENTVPDVTESSSVEPTALIEIAQAESATGEDFNQAETREEFREEAAELFSAAADENQETDAFKPQAELAAAPGDGYNNLQSMQEEHVQEGQTHQLEIDTSVNAAQGSSDYPTPGWVYQQGIADHATPIDGELRSTNHDLWGSPKSVDNGEDRFFDQLRTQTKPIYFPSEESRFEEGVPLLDGSAEAPVEAAPVEATPVEQAVPQPGQLDRVFEGDEDEDDGFFSSAQQPATENEPQEPVHIQRKSTSQVLDSLNTNRDGVHSPLSPTAEEFNDIIAAAASKSPENVQEPASEEDLAARWQAELSDDDLEVAPVEEDLAAKWQAELDDDDLLLEDEPSDLAQNTAAEVVNGHGVEPNLQALGSPFGTPQNPSKPKPAQSVYTPHQPSTADLVQSVPIPGATPLSSSAPYSTSYFQPRPEPPAPAVRAESFAERPKEGYKSPYDLPEDLAPRRKPATKPVVSSAANVPAPPPRSSSFTAPPPPQSSSGVPVPPINAATLPPASKPNAPVASAPKNFYEELPLPPVRPRSRPAESGRYTPKFNTASPAFVQPPPAAHPVTNPYAQLSGDTPQSQLQQPEKLGPYANNVGSSSQSAPAVPPINSRYSPKPPTLQPGVKPPASPRYSPAPPPPAAASAPLQRYTSQPSVIPGQTVTLPFQPRTSSPLAHHEKVSYQPNEASRKPSFPQPTSPVTGQPSHTETAAPMSPRSSQVQASGPSAVDTSSSYQQTSPPRNPYAPPSYLEEFSRRVSHVNNSTPSAYTPPPETPPFVPPRRSQTQSPTQQQSGPRLSVPSVDPLKRPASVHAPSSPTKTSHTYAPMQPSSHIRTISQSLEFIPPSDGQELDPLQRWKGAPIFKFGFGGTVLSSFPKHVPRYSAGQTAPKIKPMPGDVKTTQLKDVISFPETIVRHPGPLRNKSKKKDLVAWLSSRIAAFENEGVPQNLQAYPDSYKRRDEKILLWKAVRVLVEHDGGMQSTPDLQEALRGILFPHLQTNGLEPMYSDSLQSFGAEVINASSLSDSAESKPLSSIRNNLLIGEREKAVWSAADNRLWGHAMIIASTLDKSIWKQVVQEFVRREVRSNSGNPESLAALYEIFAGNFEESVDELVPPSARAGLQMVSKVDGHGPSKDALAGLESWKDTLGLVLSNRSPEDHRALLALGRLLLSYGRIEAAHICLIFSRAAVFGGPDDPQASIVLLGVDHVHSSPTALLDDDAILLTEAYEYATSVLGASPTSTLPHLLALKLVHAWSLTDQGRKSEAQQYCDAITAALKATTKQSGYHHQHLFFGVDELSARLKQTTGDGGSWISKPSMEKVSSSMWNKFSNFVAGDDSDAASTGSGKGGETGFGPFAQISGTPTVSRSPSVTDLYGQYPMPVAQQVPGAGTSRYQPNNQNAPNSSPDQGRGRSSLDSQRSASFGLSYGQRRGSQEYGHPSESPMYGGGPFYGSPTAGYQSTPPQTSYMPLAPVEEDMAQQAYTPPTATPQGLFGHDLPYQPPAQNPFDQSTGPEAPASQHTEADGYMPPTGNTGYEPPASNTLEVEVTEESEDEKPRKKLTMDDEDDDDIAARAEALKKAEKARKDREADEAFRKAAEADAKKPAPAKSSWWGWIKGGNKEEANSGKPIRAKLGEESSFYYDKELKKWVNKKDPNSATPARATPPPPKAMGPPSRAASGSSMPPSGTAGLGSRPPSVAPPPSGSPAPSSLGLPPTPGLGPARSASTGAVPPAGNASSRPGSSAGPPPRPSTSLSHASSIDDLLGAPQARKGATSRGRKKGRIRDLPHLAYRSVYPCIANYQPPYIVVNLHAISSGSMAWLLVL.

5 disordered regions span residues 1-57 (MENS…VPDA), 347-385 (RVFEGDEDEDDGFFSSAQQPATENEPQEPVHIQRKSTSQ), 465-956 (DDLL…QPSS), 1462-1760 (SDAA…LGEE), and 1773-1904 (VNKK…RKKG). A compositionally biased stretch (polar residues) spans 361–370 (SSAQQPATEN). Over residues 465–474 (DDLLLEDEPS) the composition is skewed to acidic residues. Composition is skewed to polar residues over residues 515–527 (SVYTPHQPSTADL) and 538–550 (PLSSSAPYSTSYF). A compositionally biased stretch (basic and acidic residues) spans 565–574 (SFAERPKEGY). Positions 603 to 619 (PAPPPRSSSFTAPPPPQ) are enriched in pro residues. Polar residues predominate over residues 696-711 (PYAQLSGDTPQSQLQQ). The span at 741–766 (PKPPTLQPGVKPPASPRYSPAPPPPA) shows a compositional bias: pro residues. 3 stretches are compositionally biased toward polar residues: residues 774-798 (RYTSQPSVIPGQTVTLPFQPRTSSP), 823-833 (SPVTGQPSHTE), and 840-864 (PRSSQVQASGPSAVDTSSSYQQTSP). The segment covering 893–904 (YTPPPETPPFVP) has biased composition (pro residues). A compositionally biased stretch (low complexity) spans 905 to 918 (PRRSQTQSPTQQQS). 2 stretches are compositionally biased toward polar residues: residues 938-956 (APSSPTKTSHTYAPMQPSS) and 1483-1495 (ISGTPTVSRSPSV). Over residues 1519–1530 (QPNNQNAPNSSP) the composition is skewed to low complexity. Polar residues-rich tracts occupy residues 1538-1547 (SLDSQRSASF), 1580-1591 (AGYQSTPPQTSY), and 1604-1613 (QAYTPPTATP). Residues 1694–1727 (IAARAEALKKAEKARKDREADEAFRKAAEADAKK) are compositionally biased toward basic and acidic residues. Low complexity predominate over residues 1854–1867 (PPAGNASSRPGSSA).

It belongs to the SEC16 family.

The protein resides in the endoplasmic reticulum membrane. In terms of biological role, involved in the initiation of assembly of the COPII coat required for the formation of transport vesicles from the endoplasmic reticulum (ER) and the selection of cargo molecules. Also involved in autophagy. This Emericella nidulans (strain FGSC A4 / ATCC 38163 / CBS 112.46 / NRRL 194 / M139) (Aspergillus nidulans) protein is COPII coat assembly protein sec16 (sec16).